A 264-amino-acid polypeptide reads, in one-letter code: Tetraspanin-12 (264 aa).

Residues 1–13 (MLRLSNAAVITTN) lie on the Cytoplasmic side of the membrane. The helical transmembrane segment at 14–34 (AILALIGLAALSFSVYVYVQG) threads the bilayer. The Extracellular segment spans residues 35-45 (PSQCQRFVQNP). Residues 46–66 (LIVTAALLFFISSLGLIAALY) form a helical membrane-spanning segment. Residues 67-75 (GSHIIITLY) are Cytoplasmic-facing. A helical transmembrane segment spans residues 76-96 (LFFLFLSILLLLVLSVFIFLV). At 97–228 (TNPTAGKALS…VLKGIRKRWR (132 aa)) the chain is on the extracellular side. Asn180 is a glycosylation site (N-linked (GlcNAc...) asparagine). Residues 229–249 (ILIVVNLLLILLVVFLYSCGC) form a helical membrane-spanning segment. Topologically, residues 250–264 (CVRKNNRVPWKRRFF) are cytoplasmic.

This sequence belongs to the tetraspanin (TM4SF) family.

It is found in the membrane. Its function is as follows. May be involved in the regulation of cell differentiation. The polypeptide is Tetraspanin-12 (TET12) (Arabidopsis thaliana (Mouse-ear cress)).